We begin with the raw amino-acid sequence, 258 residues long: 5'-nucleotidase SurE (258 aa).

Positions 16, 17, 47, and 99 each coordinate a divalent metal cation.

The protein belongs to the SurE nucleotidase family. A divalent metal cation is required as a cofactor.

Its subcellular location is the cytoplasm. It carries out the reaction a ribonucleoside 5'-phosphate + H2O = a ribonucleoside + phosphate. Nucleotidase that shows phosphatase activity on nucleoside 5'-monophosphates. The sequence is that of 5'-nucleotidase SurE from Coxiella burnetii (strain Dugway 5J108-111).